Consider the following 94-residue polypeptide: Putative defensin-like protein 88 (94 aa).

The N-terminal stretch at 1 to 26 is a signal peptide; sequence MATQKFSYFLLVLLMVFALILPSIIS. Cystine bridges form between C32–C72, C38–C59, and C48–C71.

Belongs to the DEFL family.

It is found in the secreted. This chain is Putative defensin-like protein 88, found in Arabidopsis thaliana (Mouse-ear cress).